Consider the following 101-residue polypeptide: Ubiquitin-related modifier 1 homolog (101 aa).

G101 bears the 1-thioglycine mark. A Glycyl lysine isopeptide (Gly-Lys) (interchain with K-? in acceptor proteins) cross-link involves residue G101.

The protein belongs to the URM1 family. Interacts with cer. Post-translationally, C-terminal thiocarboxylation occurs in 2 steps, it is first acyl-adenylated (-COAMP) via the hesA/moeB/thiF part of the MOCS3 homolog, then thiocarboxylated (-COSH) via the rhodanese domain of the MOCS3 homolog.

Its subcellular location is the cytoplasm. It functions in the pathway tRNA modification; 5-methoxycarbonylmethyl-2-thiouridine-tRNA biosynthesis. In terms of biological role, acts as a sulfur carrier required for 2-thiolation of mcm(5)S(2)U at tRNA wobble positions of cytosolic tRNA(Lys), tRNA(Glu) and tRNA(Gln). Serves as sulfur donor in tRNA 2-thiolation reaction by being thiocarboxylated (-COSH) at its C-terminus by MOCS3. The sulfur is then transferred to tRNA to form 2-thiolation of mcm(5)S(2)U. Also acts as a ubiquitin-like protein (UBL) that is covalently conjugated via an isopeptide bond to lysine residues of target proteins such as Prx2/Jafrac1, Ciao1, Eip71CD and GILT1. The thiocarboxylated form serves as substrate for conjugation and oxidative stress specifically induces the formation of UBL-protein conjugates. The polypeptide is Ubiquitin-related modifier 1 homolog (Drosophila ananassae (Fruit fly)).